The sequence spans 180 residues: Inner membrane-spanning protein YciB (180 aa).

A run of 6 helical transmembrane segments spans residues L4–I24, Q25–I45, L52–D72, I76–I96, I118–V138, and F150–L170.

Belongs to the YciB family.

It is found in the cell inner membrane. Plays a role in cell envelope biogenesis, maintenance of cell envelope integrity and membrane homeostasis. In Rickettsia bellii (strain RML369-C), this protein is Inner membrane-spanning protein YciB.